A 365-amino-acid polypeptide reads, in one-letter code: Cobalt-precorrin-5B C(1)-methyltransferase (365 aa).

Belongs to the CbiD family.

The enzyme catalyses Co-precorrin-5B + S-adenosyl-L-methionine = Co-precorrin-6A + S-adenosyl-L-homocysteine. It functions in the pathway cofactor biosynthesis; adenosylcobalamin biosynthesis; cob(II)yrinate a,c-diamide from sirohydrochlorin (anaerobic route): step 6/10. Its function is as follows. Catalyzes the methylation of C-1 in cobalt-precorrin-5B to form cobalt-precorrin-6A. The polypeptide is Cobalt-precorrin-5B C(1)-methyltransferase (Methanococcus maripaludis (strain C6 / ATCC BAA-1332)).